Reading from the N-terminus, the 180-residue chain is Mitochondrial membrane protein FMP33 (180 aa).

3 helical membrane-spanning segments follow: residues 34-54, 121-141, and 145-165; these read LYTSLLVTTLYGTGLACLYLE, FSIVWGFLIQLSSLIGNSTLG, and ILYKGSVVSVLGFPPLIYMAL.

It localises to the mitochondrion membrane. The sequence is that of Mitochondrial membrane protein FMP33 (FMP33) from Saccharomyces cerevisiae (strain ATCC 204508 / S288c) (Baker's yeast).